We begin with the raw amino-acid sequence, 523 residues long: MTNIHNHKILILDFGSQYTQLIARRVREIGVYCELWAWDVTEEQIREFNPTGIILSGGPESTTEENSPRAPEYVFNAGVPVLGICYGMQTMAMQLGGLTETSDHREFGYASVELKATDSLFAKLNDDLTACNPKLDVWMSHGDKVTRLPSNFQITGVTPTCPIAAMSDESRRFYGVQFHPEVTHTKSGLALLTNFVVNICGCETKWTAENIIEDAVARIKAQVGDDEVILGLSGGVDSSVTALLLHRAIGKNLHCVFVDNGLLRLNEGDQVMEMFGDKFGLNIIRVNAEDRFLDALKGIDEPEAKRKTIGKVFVDVFDDESKKLTSVKWLAQGTIYPDVIESAASKTGKAHVIKSHHNVGGLPDYMKLGLVEPLRELFKDEVRKIGLALGLPAEMLNRHPFPGPGLGVRVLGEIKKEYCDLVRRADAIFMEELHASGWYYKVSQAFTVFLPVKSVGVMGDGRKYDWAVSLRAVETIDFMTAHWAHLPYDLLGKISNRIINEVNGISRVVYDVSGKPPATIEWE.

A Glutamine amidotransferase type-1 domain is found at 8-205 (KILILDFGSQ…VVNICGCETK (198 aa)). The active-site Nucleophile is Cys-85. Residues His-179 and Glu-181 contribute to the active site. In terms of domain architecture, GMPS ATP-PPase spans 206–398 (WTAENIIEDA…LGLPAEMLNR (193 aa)). Residue 233 to 239 (SGGVDSS) participates in ATP binding.

As to quaternary structure, homodimer.

It catalyses the reaction XMP + L-glutamine + ATP + H2O = GMP + L-glutamate + AMP + diphosphate + 2 H(+). Its pathway is purine metabolism; GMP biosynthesis; GMP from XMP (L-Gln route): step 1/1. Its function is as follows. Catalyzes the synthesis of GMP from XMP. This is GMP synthase [glutamine-hydrolyzing] from Glaesserella parasuis serovar 5 (strain SH0165) (Haemophilus parasuis).